We begin with the raw amino-acid sequence, 183 residues long: BLOC-1-related complex subunit 8 homolog (183 aa).

The interval 152–183 (MIGPGTATGRTEAQAATSSNPGELQRSYTTLH) is disordered. Residues 159–183 (TGRTEAQAATSSNPGELQRSYTTLH) show a composition bias toward polar residues.

This sequence belongs to the BORCS8 family.

It localises to the lysosome membrane. May participate in the coupling of lysosomes to microtubule plus-end-directed kinesin motor. The polypeptide is BLOC-1-related complex subunit 8 homolog (Drosophila melanogaster (Fruit fly)).